The following is a 303-amino-acid chain: Pseudouridine-5'-phosphate glycosidase (303 aa).

The active-site Proton donor is Glu-26. Lys-87 and Val-107 together coordinate substrate. Asp-139 contributes to the Mn(2+) binding site. 141–143 is a binding site for substrate; sequence SAD. Lys-160 functions as the Nucleophile in the catalytic mechanism.

The protein belongs to the pseudouridine-5'-phosphate glycosidase family. As to quaternary structure, homotrimer. The cofactor is Mn(2+).

It catalyses the reaction D-ribose 5-phosphate + uracil = psi-UMP + H2O. In terms of biological role, catalyzes the reversible cleavage of pseudouridine 5'-phosphate (PsiMP) to ribose 5-phosphate and uracil. Functions biologically in the cleavage direction, as part of a pseudouridine degradation pathway. This Saccharopolyspora erythraea (strain ATCC 11635 / DSM 40517 / JCM 4748 / NBRC 13426 / NCIMB 8594 / NRRL 2338) protein is Pseudouridine-5'-phosphate glycosidase.